We begin with the raw amino-acid sequence, 377 residues long: tRNA-splicing endonuclease subunit SEN2 (377 aa).

Residues 119–174 adopt a coiled-coil conformation; that stretch reads ETEMTLEKVTQQRRLQRLEFKKERAKLERELLELRKKGGHIDEENILLEKQRESLR. Residues Tyr289, His297, and Lys328 contribute to the active site.

Belongs to the tRNA-intron endonuclease family. As to quaternary structure, heterotetramer composed of SEN2, SEN15, SEN34 and SEN54. Interacts directly with SEN54.

The protein resides in the nucleus. It localises to the endomembrane system. Its subcellular location is the mitochondrion outer membrane. It catalyses the reaction pretRNA = a 3'-half-tRNA molecule with a 5'-OH end + a 5'-half-tRNA molecule with a 2',3'-cyclic phosphate end + an intron with a 2',3'-cyclic phosphate and a 5'-hydroxyl terminus.. Its function is as follows. Constitutes one of the two catalytic subunit of the tRNA-splicing endonuclease complex, a complex responsible for identification and cleavage of the splice sites in pre-tRNA. It cleaves pre-tRNA at the 5'- and 3'-splice sites to release the intron. The products are an intron and two tRNA half-molecules bearing 2',3'-cyclic phosphate and 5'-OH termini. There are no conserved sequences at the splice sites, but the intron is invariably located at the same site in the gene, placing the splice sites an invariant distance from the constant structural features of the tRNA body. This subunit may anchor the endonuclease complex to the nuclear membrane. Probably carries the active site for 5'-splice site cleavage. The protein is tRNA-splicing endonuclease subunit SEN2 (SEN2) of Saccharomyces cerevisiae (strain ATCC 204508 / S288c) (Baker's yeast).